Consider the following 454-residue polypeptide: Chromosomal replication initiator protein DnaA (454 aa).

Residues 1-77 (MASLNENQKF…GFEVFGRMID (77 aa)) are domain I, interacts with DnaA modulators. Positions 77–115 (DYELYANDELTDIELRRLNNQSPVDEPLSVAKPTSPLVS) are domain II. Residues 116 to 332 (GLNEKYNFEN…GALNRVEFVA (217 aa)) form a domain III, AAA+ region region. Positions 160, 162, 163, and 164 each coordinate ATP. Residues 333-454 (RANGISIVDI…KDIDSIKRKF (122 aa)) are domain IV, binds dsDNA.

It belongs to the DnaA family. In terms of assembly, oligomerizes as a right-handed, spiral filament on DNA at oriC.

The protein resides in the cytoplasm. In terms of biological role, plays an essential role in the initiation and regulation of chromosomal replication. ATP-DnaA binds to the origin of replication (oriC) to initiate formation of the DNA replication initiation complex once per cell cycle. Binds the DnaA box (a 9 base pair repeat at the origin) and separates the double-stranded (ds)DNA. Forms a right-handed helical filament on oriC DNA; dsDNA binds to the exterior of the filament while single-stranded (ss)DNA is stabiized in the filament's interior. The ATP-DnaA-oriC complex binds and stabilizes one strand of the AT-rich DNA unwinding element (DUE), permitting loading of DNA polymerase. After initiation quickly degrades to an ADP-DnaA complex that is not apt for DNA replication. Binds acidic phospholipids. In Lactococcus lactis subsp. cremoris (strain MG1363), this protein is Chromosomal replication initiator protein DnaA.